Here is a 770-residue protein sequence, read N- to C-terminus: Proprotein convertase subtilisin/kexin type 7 (770 aa).

The first 36 residues, Met1–Gly36, serve as a signal peptide directing secretion. Positions Leu37–Arg140 are excised as a propeptide. The Extracellular portion of the chain corresponds to Ser141–Thr666. In terms of domain architecture, Peptidase S8 spans Gln152 to Val472. N-linked (GlcNAc...) asparagine glycosylation is found at Asn166 and Asn174. The active-site Charge relay system is Asp186. The interval Asp195–Gly228 is disordered. Over residues Pro215–Asn225 the composition is skewed to basic and acidic residues. The active-site Charge relay system is His227. Residue Asn240 is glycosylated (N-linked (GlcNAc...) asparagine). Ser405 (charge relay system) is an active-site residue. In terms of domain architecture, P/Homo B spans Ser480–Ser617. Asn510 carries an N-linked (GlcNAc...) asparagine glycan. Residues Leu667–Leu687 traverse the membrane as a helical segment. The Cytoplasmic segment spans residues Ser688–Cys770.

The protein belongs to the peptidase S8 family. Requires Ca(2+) as cofactor. In terms of tissue distribution, widely expressed. Expressed in brain, lung, muscle, heart, liver, kidney, spleen and thymus.

Its subcellular location is the golgi apparatus. The protein localises to the trans-Golgi network membrane. Inhibited by zinc and copper. Its function is as follows. Serine endoprotease that processes various proproteins by cleavage at paired basic amino acids, recognizing the RXXX[KR]R consensus motif. Likely functions in the constitutive secretory pathway. This is Proprotein convertase subtilisin/kexin type 7 (Pcsk7) from Mus musculus (Mouse).